The chain runs to 959 residues: Translation initiation factor IF-2 (959 aa).

The tract at residues 33 to 373 (SHASSVEEAD…PVTERKFHEL (341 aa)) is disordered. Polar residues predominate over residues 46–60 (IASSFSAGVTKNVQA). Basic and acidic residues predominate over residues 63–73 (AKDKQVAEQKA). Residues 76–100 (AKATTPQPAASKAAEKPAAATQEAS) show a composition bias toward low complexity. Composition is skewed to basic and acidic residues over residues 112 to 125 (FKAE…EQVA), 134 to 143 (SNDRKSDYRQ), and 179 to 192 (NDGH…DKNR). Polar residues predominate over residues 193-211 (SFNANSRQQDIGRQGQTQA). Composition is skewed to basic and acidic residues over residues 234 to 258 (ARQR…RQEA) and 266 to 276 (QTEDKKHREAP). Residues 277–287 (AKATEPAEPVA) are compositionally biased toward low complexity. The span at 306-323 (NRPDKAHDRDHGLEDGQK) shows a compositional bias: basic and acidic residues. Low complexity predominate over residues 328–346 (SWNSQNQVRNQKNSNWNNN). Residues 347–357 (KKNKKGKHHKN) are compositionally biased toward basic residues. The 170-residue stretch at 460-629 (ERAPVVTIMG…LLVAEVEELK (170 aa)) folds into the tr-type G domain. Positions 469 to 476 (GHVDHGKT) are G1. 469 to 476 (GHVDHGKT) lines the GTP pocket. Residues 494–498 (GITQH) are G2. The segment at 515–518 (DTPG) is G3. GTP contacts are provided by residues 515–519 (DTPGH) and 569–572 (NKID). A G4 region spans residues 569–572 (NKID). The segment at 605–607 (SAK) is G5.

Belongs to the TRAFAC class translation factor GTPase superfamily. Classic translation factor GTPase family. IF-2 subfamily.

The protein localises to the cytoplasm. Its function is as follows. One of the essential components for the initiation of protein synthesis. Protects formylmethionyl-tRNA from spontaneous hydrolysis and promotes its binding to the 30S ribosomal subunits. Also involved in the hydrolysis of GTP during the formation of the 70S ribosomal complex. The chain is Translation initiation factor IF-2 from Streptococcus equi subsp. zooepidemicus (strain H70).